Reading from the N-terminus, the 1335-residue chain is Probable serine/threonine-protein kinase ndrC (1335 aa).

Disordered regions lie at residues 1–70 (MSRK…KKGS), 85–158 (VDTH…LIPS), 276–447 (LPPP…SPLN), and 462–603 (TTTT…NNNK). Over residues 8 to 17 (NRSSSSNSIE) the composition is skewed to polar residues. Residues 27 to 41 (SNISNSSNINCNNSS) are compositionally biased toward low complexity. Positions 55–70 (RSKHSSPIHSLKKKGS) are enriched in basic residues. The span at 89-117 (SSSNSNNNSSSNNNNNNNNHNINSSSESS) shows a compositional bias: low complexity. Polar residues predominate over residues 118 to 132 (TPTTPRSSFTPQVTM). Residues 133 to 153 (NSNQSSGNNSPQLSSRSSSQS) show a composition bias toward low complexity. A compositionally biased stretch (pro residues) spans 276 to 288 (LPPPSQQQLPPPQ). Low complexity-rich tracts occupy residues 289–331 (SHQQ…TPQS), 345–368 (NQQQ…SPNK), 382–396 (SPSP…SPSS), 412–424 (PTPL…SPSS), 437–447 (PSSFSGGSPLN), and 462–484 (TTTT…TTIS). The segment covering 485–497 (NPNYTQNLPTTPL) has biased composition (polar residues). Low complexity predominate over residues 498-507 (SNSSSNNNNN). Residues 508–528 (GSFITLQDTTNNKSIINNNRE) show a composition bias toward polar residues. Residues 540-566 (SSGSSNTTSSTTNTTTPSSSSLTTSSG) show a composition bias toward low complexity. Residues 567–581 (KESRDRDSKDKEKDL) show a composition bias toward basic and acidic residues. Low complexity predominate over residues 586–602 (NNNNNNNNNNNNNNNNN). Residues 586-613 (NNNNNNNNNNNNNNNNNKVEKEKENYCK) adopt a coiled-coil conformation. One can recognise a Protein kinase domain in the interval 718–1019 (FKILTQIGKG…KQDFKNHPFF (302 aa)). ATP-binding positions include 724–732 (IGKGGFGQV) and K747. The active-site Proton acceptor is the D840. One can recognise an AGC-kinase C-terminal domain in the interval 1020 to 1106 (KNHNWDEIVN…RKSSALSLSM (87 aa)). The span at 1239-1284 (SQSQPSLANQLQSSSSSPSPSLQSQSQSPSLQSSSKSTPNLSSSLL) shows a compositional bias: low complexity. The segment at 1239–1313 (SQSQPSLANQ…IKKENESEEI (75 aa)) is disordered. A compositionally biased stretch (basic and acidic residues) spans 1287-1313 (PVKEELEYKNQTENEVEIKKENESEEI). Positions 1289–1325 (KEELEYKNQTENEVEIKKENESEEIQSLRDQLKEIII) form a coiled coil.

It belongs to the protein kinase superfamily. AGC Ser/Thr protein kinase family.

The catalysed reaction is L-seryl-[protein] + ATP = O-phospho-L-seryl-[protein] + ADP + H(+). The enzyme catalyses L-threonyl-[protein] + ATP = O-phospho-L-threonyl-[protein] + ADP + H(+). In Dictyostelium discoideum (Social amoeba), this protein is Probable serine/threonine-protein kinase ndrC (ndrC).